Reading from the N-terminus, the 127-residue chain is Small ribosomal subunit protein uS12m (127 aa).

Belongs to the universal ribosomal protein uS12 family.

It is found in the mitochondrion. Its function is as follows. Protein S12 is involved in the translation initiation step. The chain is Small ribosomal subunit protein uS12m (RPS12) from Chondrus crispus (Carrageen Irish moss).